Reading from the N-terminus, the 493-residue chain is Chitinase 1 (493 aa).

Positions 1-20 (MISCNILGITIAAFITSTLA) are cleaved as a signal peptide. The GH18 domain occupies 27-318 (VNVMYYWGQN…HGSSAALGQA (292 aa)). The active-site Proton donor is Glu164.

Belongs to the glycosyl hydrolase 18 family. Chitinase class III subfamily.

It catalyses the reaction Random endo-hydrolysis of N-acetyl-beta-D-glucosaminide (1-&gt;4)-beta-linkages in chitin and chitodextrins.. This is Chitinase 1 (CHI1) from Rhizopus niveus.